We begin with the raw amino-acid sequence, 133 residues long: DNA-binding protein inhibitor ID-2-A (133 aa).

The 53-residue stretch at 23–75 (ARSKTPVDDPMSLLYNMNDCYSKLKELVPSIPQNKKVSKMEILQHVIDYILDL) folds into the bHLH domain. The Nuclear export signal signature appears at 106–115 (LNTDISILSL).

In terms of assembly, heterodimer with other HLH proteins. As to expression, in the embryo, expressed in a range of tissues, with primary expression in the developing pronephros; expressed in the pronephric anlage, and by the swimming tadpole stages expressed robustly in the pronephric tubules and weakly in the pronephric duct. Expressed in the secondary heart field. In the developing nervous system, expressed in the neural crest and in the neural folds during neurula stages, and at stage 20 in the neural tube, ventral mesoderm and mid-hindbrain boundary. By early tailbud stages, expressed in the neural tube, somites and branchial arches. In tadpoles (stage 37/38), expressed in the heart, eye, otic vesicle, somites and branchial arches. Also expressed in migrating muscle cells. Expressed at a low level in limbs, with expression decreasing as limbs develop, but expressed at a high level in blastemas (regenerated limbs), where expression is localized primarily to the blastemal epidermis. Widely expressed in adults with highest expression in the spleen, skin, intestine and brain, and at a much lower level in testis and heart.

Its subcellular location is the cytoplasm. The protein resides in the nucleus. In terms of biological role, transcriptional regulator (lacking a basic DNA binding domain) which negatively regulates the basic helix-loop-helix (bHLH) transcription factors by forming heterodimers and inhibiting their DNA binding and transcriptional activity. Inhibits the activity of both neurogenic (neurod1/neuroD) and myogenic (myod1/myoD) bHLH factors. May play a role in the regulation of the circadian clock. This is DNA-binding protein inhibitor ID-2-A (id2-a) from Xenopus laevis (African clawed frog).